The chain runs to 499 residues: Rhamnogalacturonan I rhamnosyltransferase 1 (499 aa).

Residues 31–50 form a helical; Signal-anchor for type II membrane protein membrane-spanning segment; sequence WFVRVCSSILVWTCLVQLFA. Residues Asn88, Asn121, and Asn207 are each glycosylated (N-linked (GlcNAc...) asparagine). 261–263 contributes to the substrate binding site; the sequence is HLR. 3 N-linked (GlcNAc...) asparagine glycosylation sites follow: Asn375, Asn435, and Asn496.

It belongs to the glycosyltransferase GT106 family.

The protein localises to the golgi apparatus membrane. It carries out the reaction alpha-D-galacturonosyl-[(1-&gt;2)-alpha-L-rhamnosyl-(1-&gt;4)-alpha-D-galacturonosyl](n) + UDP-beta-L-rhamnose = [(1-&gt;2)-alpha-L-rhamnosyl-(1-&gt;4)-alpha-D-galacturonosyl](n+1) + UDP + H(+). The protein operates within glycan metabolism; pectin biosynthesis. Its function is as follows. Glycosyltransferase involved in the formation of rhamnogalacturonan I (RG-I) oligosaccharides in the seed coat mucilage, which is a specialized cell wall with abundant RG-I. Transfers the rhamnose residue from UDP-beta-L-rhamnose to RG-I oligosaccharides. The sequence is that of Rhamnogalacturonan I rhamnosyltransferase 1 from Arabidopsis thaliana (Mouse-ear cress).